The chain runs to 849 residues: Membrane protein-large ribosomal subunit bL9 fusion protein (849 aa).

A unknown region spans residues 1-680 (MFSKNKHNTK…TQLEGTNIKT (680 aa)). 2 consecutive transmembrane segments (helical) span residues 11–31 (FIVI…FDFQ) and 64–84 (IIFF…IISF). A GGDEF domain is found at 214–342 (KTLAIAMIAF…GGDQVVVNIE (129 aa)). The large ribosomal subunit protein bL9 stretch occupies residues 681–849 (VTDTLKHFLK…FLNVTERKSK (169 aa)).

This sequence belongs to the bacterial ribosomal protein bL9 family.

It is found in the cell membrane. Its function is as follows. Binds to the 23S rRNA. The polypeptide is Membrane protein-large ribosomal subunit bL9 fusion protein (Aster yellows witches'-broom phytoplasma (strain AYWB)).